The chain runs to 131 residues: Biogenesis of lysosome-related organelles complex 1 subunit 5 (131 aa).

Belongs to the BLOC1S5 family. As to quaternary structure, component of the biogenesis of lysosome-related organelles complex-1 (BLOC-1) composed at least of blos-1, blos-2, blos-4, dsbn-1, glo-2, mutd-1 and snpn-1.

In terms of biological role, component of the biogenesis of lysosome-related organelles complex-1 (BLOC-1) involved in gut granule biogenesis. The protein is Biogenesis of lysosome-related organelles complex 1 subunit 5 (mutd-1) of Caenorhabditis elegans.